A 793-amino-acid polypeptide reads, in one-letter code: Pentatricopeptide repeat-containing protein At1g03100, mitochondrial (793 aa).

A mitochondrion-targeting transit peptide spans 1 to 87; it reads MFSLRKTKLQ…REAISSISGS (87 aa). PPR repeat units lie at residues 257–291, 292–322, 330–364, 458–492, 495–529, 530–564, 565–599, 601–631, 637–671, 672–707, and 713–747; these read NTQV…GVKA, DANL…IDEA, FWQF…GKVA, TEEI…DSPV, DNSM…GVRT, GSSV…GIQL, DSSC…KILR, GNQK…IREV, GVHD…GHSP, NAQT…AAAT, and DQEL…NMFV.

The protein belongs to the PPR family. P subfamily.

The protein resides in the mitochondrion. The polypeptide is Pentatricopeptide repeat-containing protein At1g03100, mitochondrial (Arabidopsis thaliana (Mouse-ear cress)).